A 198-amino-acid chain; its full sequence is Glycerol-3-phosphate acyltransferase (198 aa).

Transmembrane regions (helical) follow at residues 2-22, 53-73, 79-99, 113-133, and 152-172; these read IIDL…FGVL, LGFI…VIAT, PFMY…SCFL, VLIP…TFFI, and IILF…IMAL.

Belongs to the PlsY family. Probably interacts with PlsX.

The protein localises to the cell membrane. It carries out the reaction an acyl phosphate + sn-glycerol 3-phosphate = a 1-acyl-sn-glycero-3-phosphate + phosphate. It functions in the pathway lipid metabolism; phospholipid metabolism. In terms of biological role, catalyzes the transfer of an acyl group from acyl-phosphate (acyl-PO(4)) to glycerol-3-phosphate (G3P) to form lysophosphatidic acid (LPA). This enzyme utilizes acyl-phosphate as fatty acyl donor, but not acyl-CoA or acyl-ACP. This Lawsonia intracellularis (strain PHE/MN1-00) protein is Glycerol-3-phosphate acyltransferase.